A 67-amino-acid chain; its full sequence is DNA gyrase inhibitor YacG (67 aa).

Zn(2+) contacts are provided by C10, C13, C29, and C33.

This sequence belongs to the DNA gyrase inhibitor YacG family. Interacts with GyrB. Requires Zn(2+) as cofactor.

Inhibits all the catalytic activities of DNA gyrase by preventing its interaction with DNA. Acts by binding directly to the C-terminal domain of GyrB, which probably disrupts DNA binding by the gyrase. This Pasteurella multocida (strain Pm70) protein is DNA gyrase inhibitor YacG.